A 130-amino-acid chain; its full sequence is Small ribosomal subunit protein eS8 (130 aa).

It belongs to the eukaryotic ribosomal protein eS8 family. Part of the 30S ribosomal subunit.

The protein is Small ribosomal subunit protein eS8 of Ignicoccus hospitalis (strain KIN4/I / DSM 18386 / JCM 14125).